Consider the following 346-residue polypeptide: MLVLGIESSCDETGLALYDTQRGLLAHALHSQIAMHREYGGVVPELASRDHIRRALPLLDEVMIQSGTHRDDIDAIAFTQGPGLAGALLVGASIANALALAWNKPTIGIHHLEGHLLSPLLVDAPPPFPFIALLVSGGHTQLMRVTDVGVYETLGETLDDAAGEAFDKTAKLIGLGYPGGPEVSRLAETGTPGAVVLPRPMLHSGDLDFSFSGLKTAVLTQMKKFEAAKLEGDALERAKADLARGFVDAAVDVLVAKSLAALKQTKLKRLVVAGGVGANRQLRAALSAAAAKRGFDVHYPDLALCTDNGAMIALAGALRLGRWPEQANTDYAFTVKPRWDLASLAR.

The Fe cation site is built by histidine 111 and histidine 115. Residues 134-138 (LVSGG), aspartate 167, glycine 180, and asparagine 279 each bind substrate. Residue aspartate 307 participates in Fe cation binding.

It belongs to the KAE1 / TsaD family. Fe(2+) serves as cofactor.

It is found in the cytoplasm. It catalyses the reaction L-threonylcarbamoyladenylate + adenosine(37) in tRNA = N(6)-L-threonylcarbamoyladenosine(37) in tRNA + AMP + H(+). In terms of biological role, required for the formation of a threonylcarbamoyl group on adenosine at position 37 (t(6)A37) in tRNAs that read codons beginning with adenine. Is involved in the transfer of the threonylcarbamoyl moiety of threonylcarbamoyl-AMP (TC-AMP) to the N6 group of A37, together with TsaE and TsaB. TsaD likely plays a direct catalytic role in this reaction. The chain is tRNA N6-adenosine threonylcarbamoyltransferase from Burkholderia vietnamiensis (strain G4 / LMG 22486) (Burkholderia cepacia (strain R1808)).